The following is an 891-amino-acid chain: Mating-type protein A-alpha Y1 (891 aa).

A DNA-binding region (homeobox) is located at residues Ser146–Leu205. 5 disordered regions span residues Pro241–Leu291, Asp319–Gly339, Thr393–Ser437, Ala610–Leu718, and Met800–Glu822. A compositionally biased stretch (polar residues) spans Leu244 to Arg257. The segment covering Pro328–Pro337 has biased composition (basic residues). The segment covering Ala427–Ser437 has biased composition (low complexity). The segment covering Lys627–Leu638 has biased composition (basic residues). 2 stretches are compositionally biased toward low complexity: residues Val651–Arg667 and Gln676–Ser710. Over residues Met800–Ser818 the composition is skewed to polar residues.

It is found in the nucleus. Specifies A-alpha-1 mating-type. May regulate the expression of genes specific to the homokaryotic cell type. This is Mating-type protein A-alpha Y1 from Schizophyllum commune (Split gill fungus).